The chain runs to 175 residues: Albumin-1 (175 aa).

A disulfide bridge links Cys135 with Cys141.

It belongs to the protease inhibitor I3 (leguminous Kunitz-type inhibitor) family.

2S seed storage protein. The chain is Albumin-1 from Psophocarpus tetragonolobus (Winged bean).